Consider the following 447-residue polypeptide: MIGFADRLAEITKKIKGASIIDEDFVKEVVRDVQRALLEADVDVKLVLELSKRIEKRALEEEPPAGVPKRDYLLRIVYEELVELLGGEKTEGLDIDLSRDVNVIMLVGLYGMGKTTTAAKLARYLQRKGYRVGLVGADPYRPAAGEQLRQLAEEVDVPVHVEDVDDAVEMAVKGVEALKDECDVVIVDTAGRDRLSEDLIDELREMAERIEPHEVLLVLDATVGQKAGDHAEAFHEAVQLTGVVITKLDTAAKGGGALSAVARTGAPIKFVGTGERVDDLEEFNPRSFVARLLGIGDIDELLRRTEEMLEEEEKAEDVLEGEFTLKDLYEQLEALSKMGPVDKLLQYVPGMGGGRNVRKISQITEERLKKYKVIMDSMTEKELENPEILNKSRIRRIAIGSGTSERDVIELLNHYRMMKDVIEDIQSGRIPRIGGELGRVIRNVLRG.

Residues 108 to 115 (GLYGMGKT), 188 to 192 (DTAGR), and 246 to 249 (TKLD) each bind GTP.

It belongs to the GTP-binding SRP family. SRP54 subfamily. In terms of assembly, part of the signal recognition particle protein translocation system, which is composed of SRP and FtsY. Archaeal SRP consists of a 7S RNA molecule of 300 nucleotides and two protein subunits: SRP54 and SRP19.

Its subcellular location is the cytoplasm. It carries out the reaction GTP + H2O = GDP + phosphate + H(+). Functionally, involved in targeting and insertion of nascent membrane proteins into the cytoplasmic membrane. Binds to the hydrophobic signal sequence of the ribosome-nascent chain (RNC) as it emerges from the ribosomes. The SRP-RNC complex is then targeted to the cytoplasmic membrane where it interacts with the SRP receptor FtsY. This chain is Signal recognition particle 54 kDa protein, found in Methanopyrus kandleri (strain AV19 / DSM 6324 / JCM 9639 / NBRC 100938).